The sequence spans 233 residues: Ubiquitin carboxyl-terminal hydrolase isozyme L4 (233 aa).

Positions 5-232 (RWLPLEANPE…LRFNAIALSA (228 aa)) constitute a UCH catalytic domain. Residues 8-13 (PLEANP) form an interaction with ubiquitin region. Cys95 acts as the Nucleophile in catalysis. Residue Ser133 is modified to Phosphoserine. His172 (proton donor) is an active-site residue. Positions 222-227 (ELRFNA) are interaction with ubiquitin.

It belongs to the peptidase C12 family. As to expression, expressed in various tissues at low level.

The protein localises to the cytoplasm. The enzyme catalyses Thiol-dependent hydrolysis of ester, thioester, amide, peptide and isopeptide bonds formed by the C-terminal Gly of ubiquitin (a 76-residue protein attached to proteins as an intracellular targeting signal).. Functionally, ubiquitin-protein hydrolase is involved both in the processing of ubiquitin precursors and of ubiquitinated proteins. This enzyme is a thiol protease that recognizes and hydrolyzes a peptide bond at the C-terminal glycine of ubiquitin. The chain is Ubiquitin carboxyl-terminal hydrolase isozyme L4 (Uchl4) from Mus musculus (Mouse).